The primary structure comprises 371 residues: Aspartate-semialdehyde dehydrogenase (371 aa).

NADP(+) contacts are provided by residues 11–14 (RGMV), 38–39 (TS), and glutamine 75. A phosphate-binding site is contributed by arginine 104. Cysteine 137 acts as the Acyl-thioester intermediate in catalysis. Glutamine 164 contributes to the substrate binding site. 167-168 (SG) is a binding site for NADP(+). A substrate-binding site is contributed by glutamate 243. Lysine 246 provides a ligand contact to phosphate. Residue arginine 269 participates in substrate binding. Residue histidine 276 is the Proton acceptor of the active site. Residue glutamine 352 coordinates NADP(+).

It belongs to the aspartate-semialdehyde dehydrogenase family. As to quaternary structure, homodimer.

It carries out the reaction L-aspartate 4-semialdehyde + phosphate + NADP(+) = 4-phospho-L-aspartate + NADPH + H(+). Its pathway is amino-acid biosynthesis; L-lysine biosynthesis via DAP pathway; (S)-tetrahydrodipicolinate from L-aspartate: step 2/4. The protein operates within amino-acid biosynthesis; L-methionine biosynthesis via de novo pathway; L-homoserine from L-aspartate: step 2/3. It participates in amino-acid biosynthesis; L-threonine biosynthesis; L-threonine from L-aspartate: step 2/5. Catalyzes the NADPH-dependent formation of L-aspartate-semialdehyde (L-ASA) by the reductive dephosphorylation of L-aspartyl-4-phosphate. The sequence is that of Aspartate-semialdehyde dehydrogenase from Buchnera aphidicola subsp. Acyrthosiphon pisum (strain APS) (Acyrthosiphon pisum symbiotic bacterium).